The primary structure comprises 463 residues: T-box transcription factor TBX1-A (463 aa).

Disordered regions lie at residues Ser-39 to Ala-58 and Gly-75 to Asn-104. A compositionally biased stretch (low complexity) spans Gly-75–Ser-96. Residues Leu-119–Asp-297 constitute a DNA-binding region (T-box). 2 disordered regions span residues Arg-320 to Gly-354 and Val-377 to Tyr-409. Residues Asn-323–Gly-332 are compositionally biased toward polar residues. Positions Ser-333 to Ala-347 are enriched in basic and acidic residues. The Nuclear localization signal motif lies at Lys-420 to Ile-431.

In terms of assembly, binds DNA as a dimer. Interacts with dscr6/ripply3.

It localises to the nucleus. In terms of biological role, probable transcriptional regulator involved in developmental processes. Binds to the palindromic T site 5'-TTCACACCTAGGTGTGAA-3' DNA sequence. Induces pre-placodal ectoderm (PPE) gene expression in regions where RIPPLY3 is absent. Plays a role in the formation of the anteroposterior (AP) axis during embryonic development; required to establish the posterolateral border of the pre-placodal ectoderm (PPE) acting downstream of the retinoic acid receptor (RAR) signaling. This chain is T-box transcription factor TBX1-A (tbx1-a), found in Xenopus laevis (African clawed frog).